The chain runs to 426 residues: Glutamate-1-semialdehyde 2,1-aminomutase (426 aa).

The residue at position 265 (Lys-265) is an N6-(pyridoxal phosphate)lysine.

The protein belongs to the class-III pyridoxal-phosphate-dependent aminotransferase family. HemL subfamily. As to quaternary structure, homodimer. Pyridoxal 5'-phosphate is required as a cofactor.

It is found in the cytoplasm. It catalyses the reaction (S)-4-amino-5-oxopentanoate = 5-aminolevulinate. It functions in the pathway porphyrin-containing compound metabolism; protoporphyrin-IX biosynthesis; 5-aminolevulinate from L-glutamyl-tRNA(Glu): step 2/2. This chain is Glutamate-1-semialdehyde 2,1-aminomutase, found in Alteromonas mediterranea (strain DSM 17117 / CIP 110805 / LMG 28347 / Deep ecotype).